Reading from the N-terminus, the 98-residue chain is N(2)-fixation sustaining protein CowN (98 aa).

The protein belongs to the CowN family.

In terms of biological role, is required to sustain N(2)-dependent growth in the presence of low levels of carbon monoxide (CO). Probably acts by protecting the N(2) fixation ability of the nitrogenase complex, which is inactivated in the presence of CO. The polypeptide is N(2)-fixation sustaining protein CowN (Dechloromonas aromatica (strain RCB)).